Here is a 401-residue protein sequence, read N- to C-terminus: Tryptophan synthase beta chain (401 aa).

Lysine 91 is subject to N6-(pyridoxal phosphate)lysine.

The protein belongs to the TrpB family. Tetramer of two alpha and two beta chains. It depends on pyridoxal 5'-phosphate as a cofactor.

The enzyme catalyses (1S,2R)-1-C-(indol-3-yl)glycerol 3-phosphate + L-serine = D-glyceraldehyde 3-phosphate + L-tryptophan + H2O. The protein operates within amino-acid biosynthesis; L-tryptophan biosynthesis; L-tryptophan from chorismate: step 5/5. Functionally, the beta subunit is responsible for the synthesis of L-tryptophan from indole and L-serine. The protein is Tryptophan synthase beta chain of Lactococcus lactis subsp. cremoris (strain MG1363).